We begin with the raw amino-acid sequence, 785 residues long: Uncoating factor OPG117 (785 aa).

It belongs to the orthopoxvirus OPG117 family. As to quaternary structure, homomultimer; hexamer. Interacts with OPG148.

It is found in the host cytoplasm. Multifunctional protein required for genome uncoating and replication. Major viral uncoating protein that is required for the release of the viral genome from incoming viral cores containing the viral DNA genome. Possesses an ATPase activity that is required for hexamerization and uncoating. This Cynomys gunnisoni (Gunnison's prairie dog) protein is Uncoating factor OPG117 (OPG117).